Here is a 340-residue protein sequence, read N- to C-terminus: S-adenosylmethionine:tRNA ribosyltransferase-isomerase (340 aa).

Belongs to the QueA family. In terms of assembly, monomer.

Its subcellular location is the cytoplasm. The enzyme catalyses 7-aminomethyl-7-carbaguanosine(34) in tRNA + S-adenosyl-L-methionine = epoxyqueuosine(34) in tRNA + adenine + L-methionine + 2 H(+). It functions in the pathway tRNA modification; tRNA-queuosine biosynthesis. In terms of biological role, transfers and isomerizes the ribose moiety from AdoMet to the 7-aminomethyl group of 7-deazaguanine (preQ1-tRNA) to give epoxyqueuosine (oQ-tRNA). This is S-adenosylmethionine:tRNA ribosyltransferase-isomerase from Chromobacterium violaceum (strain ATCC 12472 / DSM 30191 / JCM 1249 / CCUG 213 / NBRC 12614 / NCIMB 9131 / NCTC 9757 / MK).